The sequence spans 336 residues: Alcohol dehydrogenase (336 aa).

Positions 37, 58, 89, 92, 95, 103, and 145 each coordinate Zn(2+).

The protein belongs to the zinc-containing alcohol dehydrogenase family. It depends on Zn(2+) as a cofactor.

It carries out the reaction a primary alcohol + NAD(+) = an aldehyde + NADH + H(+). It catalyses the reaction a secondary alcohol + NAD(+) = a ketone + NADH + H(+). The protein is Alcohol dehydrogenase (adh) of Staphylococcus aureus (strain Mu50 / ATCC 700699).